A 537-amino-acid chain; its full sequence is Tyrosine-protein kinase Fyn (537 aa).

Residue G2 is the site of N-myristoyl glycine attachment. Residues C3 and C6 are each lipidated (S-palmitoyl cysteine). The disordered stretch occupies residues L14 to T35. Phosphoserine is present on residues S21 and S26. The region spanning T82–S143 is the SH3 domain. Residues W149–C246 form the SH2 domain. A Phosphotyrosine modification is found at Y185. Residues L271–F524 enclose the Protein kinase domain. Residues L277 to V285 and K299 contribute to the ATP site. D390 serves as the catalytic Proton acceptor. Position 420 is a phosphotyrosine; by autocatalysis (Y420). A Phosphotyrosine modification is found at Y531.

Belongs to the protein kinase superfamily. Tyr protein kinase family. SRC subfamily. In terms of assembly, interacts (via its SH3 domain) with PIK3R1 and PRMT8. Interacts with FYB1, PAG1, and SH2D1A. Interacts with CD79A (tyrosine-phosphorylated form); the interaction increases FYN activity. Interacts (via SH2 domain) with CSF1R (tyrosine phosphorylated). Interacts with TOM1L1 (phosphorylated form). Interacts with KDR (tyrosine phosphorylated). Interacts (via SH3 domain) with KLHL2 (via N-terminus). Interacts with SH2D1A and SLAMF1. Interacts with ITCH; the interaction phosphorylates ITCH and negatively regulates its activity. Interacts with FASLG. Interacts with RUNX3. Interacts with KIT. Interacts with EPHA8; possible downstream effector of EPHA8 in regulation of cell adhesion. Interacts with PTK2/FAK1; this interaction leads to PTK2/FAK1 phosphorylation and activation. Interacts with CAV1; this interaction couples integrins to the Ras-ERK pathway. Interacts with UNC119. Interacts (via SH2 domain) with PTPRH (phosphorylated form). Interacts with PTPRO (phosphorylated form). Interacts with PTPRB (phosphorylated form). Interacts with FYB2. Interacts with DSCAM. Interacts with SKAP1 and FYB1; this interaction promotes the phosphorylation of CLNK. Interacts with NEDD9; in the presence of PTK2. Mn(2+) is required as a cofactor. Autophosphorylated at Tyr-420. Phosphorylation on the C-terminal tail at Tyr-531 by CSK maintains the enzyme in an inactive state. PTPRC/CD45 dephosphorylates Tyr-531 leading to activation. Dephosphorylation at Tyr-420 by PTPN2 negatively regulates T-cell receptor signaling. Phosphorylated at tyrosine residues, which can be enhanced by NTN1. In terms of processing, palmitoylated. Palmitoylation at Cys-3 and Cys-6, probably by ZDHHC21, regulates subcellular location. Detected in spinal cord oligodendrocytes (at protein level).

It localises to the cytoplasm. Its subcellular location is the nucleus. The protein resides in the cell membrane. It is found in the perikaryon. The enzyme catalyses L-tyrosyl-[protein] + ATP = O-phospho-L-tyrosyl-[protein] + ADP + H(+). With respect to regulation, inhibited by phosphorylation of Tyr-531 by leukocyte common antigen and activated by dephosphorylation of this site. In terms of biological role, non-receptor tyrosine-protein kinase that plays a role in many biological processes including regulation of cell growth and survival, cell adhesion, integrin-mediated signaling, cytoskeletal remodeling, cell motility, immune response and axon guidance. Inactive FYN is phosphorylated on its C-terminal tail within the catalytic domain. Following activation by PKA, the protein subsequently associates with PTK2/FAK1, allowing PTK2/FAK1 phosphorylation, activation and targeting to focal adhesions. Involved in the regulation of cell adhesion and motility through phosphorylation of CTNNB1 (beta-catenin) and CTNND1 (delta-catenin). Regulates cytoskeletal remodeling by phosphorylating several proteins including the actin regulator WAS and the microtubule-associated proteins MAP2 and MAPT. Promotes cell survival by phosphorylating AGAP2/PIKE-A and preventing its apoptotic cleavage. Participates in signal transduction pathways that regulate the integrity of the glomerular slit diaphragm (an essential part of the glomerular filter of the kidney) by phosphorylating several slit diaphragm components including NPHS1, KIRREL1 and TRPC6. Plays a role in neural processes by phosphorylating DPYSL2, a multifunctional adapter protein within the central nervous system, ARHGAP32, a regulator for Rho family GTPases implicated in various neural functions, and SNCA, a small pre-synaptic protein. Involved in reelin signaling by mediating phosphorylation of DAB1 following reelin (RELN)-binding to its receptor. Participates in the downstream signaling pathways that lead to T-cell differentiation and proliferation following T-cell receptor (TCR) stimulation. Phosphorylates PTK2B/PYK2 in response to T-cell receptor activation. Also participates in negative feedback regulation of TCR signaling through phosphorylation of PAG1, thereby promoting interaction between PAG1 and CSK and recruitment of CSK to lipid rafts. CSK maintains LCK and FYN in an inactive form. Promotes CD28-induced phosphorylation of VAV1. In mast cells, phosphorylates CLNK after activation of immunoglobulin epsilon receptor signaling. Can also promote CD244-mediated NK cell activation. The polypeptide is Tyrosine-protein kinase Fyn (Rattus norvegicus (Rat)).